A 312-amino-acid chain; its full sequence is Taste receptor type 2 member 9 (312 aa).

Residues 1-9 are Extracellular-facing; it reads MPSAIEAIY. The helical transmembrane segment at 10 to 32 threads the bilayer; the sequence is IILIAGELTIGIWGNGFIVLVNC. Residues 33–52 are Cytoplasmic-facing; the sequence is XDWLKRRDISLIDIILISLA. Residues 53–72 form a helical membrane-spanning segment; the sequence is ISRICLLCVISLDGFFMLLF. Residues 73-86 lie on the Extracellular side of the membrane; it reads PGTYGNSVLVSIVN. A helical transmembrane segment spans residues 87–109; it reads VVWTFANNSSLWFTSCLSIFYLL. The Cytoplasmic segment spans residues 110 to 128; it reads KIANISHPFFFWLKLKINK. The helical transmembrane segment at 129-146 threads the bilayer; that stretch reads VMLAILLGSFLISLIISV. Residues 147–180 lie on the Extracellular side of the membrane; it reads XKNDDMWYHLFKVSXEENITWEFKVSKIPGTFKQ. Asn164 carries N-linked (GlcNAc...) asparagine glycosylation. A helical membrane pass occupies residues 181 to 203; sequence LTLNLGGRVPFILCLISFFLLLF. Residues 204–234 lie on the Cytoplasmic side of the membrane; it reads SLVRHTKQIQLHATGFRDPSTEAHMRAIKAV. The helical transmembrane segment at 235 to 257 threads the bilayer; sequence IIFLLLLIVYYPVFLVMTSSALI. Residues 258–261 lie on the Extracellular side of the membrane; sequence PQGK. A helical membrane pass occupies residues 262-284; sequence LVLMIGDIVTVIFPSSHSFILIM. Over 285 to 312 the chain is Cytoplasmic; that stretch reads GNSKLREAFLKMLRFVKGFLRRRKPFVP.

Belongs to the G-protein coupled receptor T2R family.

It is found in the membrane. Gustducin-coupled receptor implicated in the perception of bitter compounds in the oral cavity and the gastrointestinal tract. Signals through PLCB2 and the calcium-regulated cation channel TRPM5. This is Taste receptor type 2 member 9 (TAS2R9) from Pan troglodytes (Chimpanzee).